A 1717-amino-acid chain; its full sequence is MLASKHTPWRRLQGISFGMYSAEELKKLSVKSITNPRYVDYLGNPSANGLYDLALGPADSKEVCATCVQDFNNCSGHLGHIDLPLTVYNPFLFDKLYLLLRGSCLSCHMLTCPRAAIYLLISQLRVLEVGALQAVYELERILSRFLEETGDPSAFEIQEELEEYTSKILQNNLLGSQGTHVKNVCESRSKLVAQFWKTHMAAKQCPHCKTGRSVVRKEHNSKLIITYPATVHKKSDQEGTELPEGVPEAPGIDKAQMGKRGYLTPSSAQEHLFAIWKNEGFFLNYLFSGLDDIGPESSFNPSMFFLDFIVVPPSRYRPVNRLGDQMFTNGQTVNLQAVMKDAVLIRKLLALMAQEQKLPCEMTELTIDKENDSSVAIDRSFLGLLPGPSLTDKLYNIWIRLQSHVNIVFDSEMDKLMLEKYPGIRQILEKKEGLFRKHMMGKRVDYAARSVICPDMYINTNEIGIPMVFATKLTYPQPVTPWNVQELRQAVINGPNVHPGASMVINEDGSRTALSSVDAAQREAVAKQLLTPATGAPKPQGTKVVCRHVKNGDILLLNRQPTLHRPSIQAHRARILPEEKVLRLHYANCKAYNADFDGDEMNAHFPQSELGRAEAYVLACTDQQYLVPKDGQPLAGLIQDHMVSGANMTIRGCFFTREQYMELVYRGLTDKVGRVKLFPPAILKPFPLWTGKQVVSTLLINIIPEDYAPLNLSGKAKIGSKAWVKEKPRPIPDFDPDSMCESQVIIREGELLCGVLDKAHYGSSAYGLVHCCYEIYGGETSGRVLTCLARLFTAYLQLYRGFTLGVEDILVKPNADVVRQRIIEESTQCGPQAVKAALSLPETASCDEIQGKWQDAHLSKDQRDFNMIDMKFKEEVNHYSNEINKACMPLGLHRQFPENNLQMMVQSGAKGSTVNTMQISCLLGQIELEGRRPPLMASGKSLPCFEPYEFTPRAGGFVTGRFLTGIRPPEFFFHCMAGREGLVDTAVKTSRSGYLQRCIIKHLEGLVIQYDLTVRDSDGSVVQFLYGEDGLDIPKTQFLQPKQFPFLAGNYEVIMKSKHLHEVLSRADPQKVLGHIKAIKKWHHKHSGALLRKGAFLSFSQKIQAAVKALNLKGSIQNGRSPETQQMLQMWYDLDEESRWKYQKRAAPCPDPSLSVWRPDIYFASVSETFEKKIDDFSQEWAAQAERSYKKSELSLDRLRTLLQLKWQRSLCDPGEAVGLLAAQSIGEPSTQMTLNTFHFAGRGEMNVTLGIPRLREILMVASANIKTPMMSVPVFDTKKALKKVKSLKKRLTRVCLGEVLQKVDIQESFCMGEKRNKFQVYELRFQFLPHAYYQQEKCLRPEDILHFMETRFFKLLMEAIKKKKNKASAFRNVNSRRATQKDLNDTEDSGRSQREEERDEEEEGNIVDAEAEEGDADASDTKRKEKQEEEVDYESEEEGEEEEEEEVQEEGNIKGDGVHQGHEPDEEEHLGLEEEESSQKPPRRHSRPQGAEAIKRRIQAVRESYSFIEDYQYDTEESLWCQVTVKLPLMKINFDMSSLVVSLAHKAIVYTTKGITRCLLNETTNSKNEKELVLNTEGINLPELFKYSEILDLRRLYSNDIHAMANTYGIEAALRVIEKEIKDVFAVYGIAVDPRHLSLVADYMCFEGVYKPLNRFGIQSSSSPLQQMTFETSFQFLKQATMMGSHDELKSPSACLVVGKVVKGGTGLFELKQPLR.

Positions 64, 67, 74, 77, 104, and 107 each coordinate Zn(2+). A clamp region spans residues 110–201 (LTCPRAAIYL…VAQFWKTHMA (92 aa)). Residues Cys205 and Cys208 each contribute to the Zn(2+) site. Residues 327–433 (FTNGQTVNLQ…IRQILEKKEG (107 aa)) are clamp. Positions 410-423 (DSEMDKLMLEKYPG) are rudder. Residues Lys431, Arg436, and Arg443 each coordinate DNA. The involved in RRN3 binding to Pol I complex stretch occupies residues 475–549 (YPQPVTPWNV…QGTKVVCRHV (75 aa)). Position 559 (Arg559) interacts with RNA. Residues Asp595, Asp597, and Asp599 each coordinate Mg(2+). Residue Asp599 participates in RNA binding. The segment at 812–890 (KPNADVVRQR…NEINKACMPL (79 aa)) is funnel. Residues 967-1008 (RPPEFFFHCMAGREGLVDTAVKTSRSGYLQRCIIKHLEGLVI) are bridging helix. Residues 1067-1162 (ADPQKVLGHI…SLSVWRPDIY (96 aa)) are mediates the interaction with TOP2A. A trigger loop region spans residues 1214-1255 (PGEAVGLLAAQSIGEPSTQMTLNTFHFAGRGEMNVTLGIPRL). Arg1256 is a binding site for DNA. Residues 1372-1493 (RNVNSRRATQ…RRHSRPQGAE (122 aa)) form a disordered region. The span at 1380 to 1397 (TQKDLNDTEDSGRSQREE) shows a compositional bias: basic and acidic residues. At Ser1393 the chain carries Phosphoserine. Acidic residues-rich tracts occupy residues 1398–1419 (ERDE…DADA) and 1429–1450 (EEEV…EVQE). The span at 1452-1464 (GNIKGDGVHQGHE) shows a compositional bias: basic and acidic residues. A compositionally biased stretch (acidic residues) spans 1465–1477 (PDEEEHLGLEEEE).

It belongs to the RNA polymerase beta' chain family. In terms of assembly, component of the RNA polymerase I (Pol I) complex consisting of 13 subunits: a ten-subunit catalytic core composed of POLR1A/RPA1, POLR1B/RPA2, POLR1C/RPAC1, POLR1D/RPAC2, POLR1H/RPA12, POLR2E/RPABC1, POLR2F/RPABC2, POLR2H/RPABC3, POLR2K/RPABC4 and POLR2L/RPABC5; a mobile stalk subunit POLR1F/RPA43 protruding from the core and additional subunits homologous to general transcription factors POLR1E/RPA49 and POLR1G/RPA34. Part of Pol I pre-initiation complex (PIC), in which Pol I core assembles with RRN3 and promoter-bound UTBF and SL1/TIF-IB complex. Interacts (via dock II domain) with TOP2A; this interaction may assist Pol I transcription initiation by releasing supercoils occurring during DNA unwinding. Interacts with CAVIN1; this interaction induces the dissociation of Pol I complex paused at rDNA terminator sequences. Interacts with MYO1C. Interacts with ERBB2. Interacts with DDX11. Interacts with RECQL5. It depends on Mg(2+) as a cofactor. Phosphorylated.

Its subcellular location is the nucleus. It localises to the nucleolus. The protein resides in the chromosome. It catalyses the reaction RNA(n) + a ribonucleoside 5'-triphosphate = RNA(n+1) + diphosphate. Functionally, catalytic core component of RNA polymerase I (Pol I), a DNA-dependent RNA polymerase which synthesizes ribosomal RNA precursors using the four ribonucleoside triphosphates as substrates. Transcribes 47S pre-rRNAs from multicopy rRNA gene clusters, giving rise to 5.8S, 18S and 28S ribosomal RNAs. Pol I-mediated transcription cycle proceeds through transcription initiation, transcription elongation and transcription termination stages. During transcription initiation, Pol I pre-initiation complex (PIC) is recruited by the selectivity factor 1 (SL1/TIF-IB) complex bound to the core promoter that precedes an rDNA repeat unit. The PIC assembly bends the promoter favoring the formation of the transcription bubble and promoter escape. Once the polymerase has escaped from the promoter it enters the elongation phase during which RNA is actively polymerized, based on complementarity with the template DNA strand. Highly processive, assembles in structures referred to as 'Miller trees' where many elongating Pol I complexes queue and transcribe the same rDNA coding regions. At terminator sequences downstream of the rDNA gene, PTRF interacts with Pol I and halts Pol I transcription leading to the release of the RNA transcript and polymerase from the DNA. Forms Pol I active center together with the second largest subunit POLR1B/RPA2. Appends one nucleotide at a time to the 3' end of the nascent RNA, with POLR1A/RPA1 contributing a Mg(2+)-coordinating DxDGD motif, and POLR1B/RPA2 participating in the coordination of a second Mg(2+) ion and providing lysine residues believed to facilitate Watson-Crick base pairing between the incoming nucleotide and the template base. Typically, Mg(2+) ions direct a 5' nucleoside triphosphate to form a phosphodiester bond with the 3' hydroxyl of the preceding nucleotide of the nascent RNA, with the elimination of pyrophosphate. Has proofreading activity: Pauses and backtracks to allow the cleavage of a missincorporated nucleotide via POLR1H/RPA12. High Pol I processivity is associated with decreased transcription fidelity. The polypeptide is DNA-directed RNA polymerase I subunit RPA1 (Mus musculus (Mouse)).